Here is a 433-residue protein sequence, read N- to C-terminus: Glutamate-1-semialdehyde 2,1-aminomutase (433 aa).

The residue at position 265 (lysine 265) is an N6-(pyridoxal phosphate)lysine.

This sequence belongs to the class-III pyridoxal-phosphate-dependent aminotransferase family. HemL subfamily. As to quaternary structure, homodimer. The cofactor is pyridoxal 5'-phosphate.

It is found in the cytoplasm. The enzyme catalyses (S)-4-amino-5-oxopentanoate = 5-aminolevulinate. It participates in porphyrin-containing compound metabolism; protoporphyrin-IX biosynthesis; 5-aminolevulinate from L-glutamyl-tRNA(Glu): step 2/2. In Shewanella denitrificans (strain OS217 / ATCC BAA-1090 / DSM 15013), this protein is Glutamate-1-semialdehyde 2,1-aminomutase.